A 249-amino-acid chain; its full sequence is Indole-3-glycerol phosphate synthase (249 aa).

This sequence belongs to the TrpC family.

The catalysed reaction is 1-(2-carboxyphenylamino)-1-deoxy-D-ribulose 5-phosphate + H(+) = (1S,2R)-1-C-(indol-3-yl)glycerol 3-phosphate + CO2 + H2O. It functions in the pathway amino-acid biosynthesis; L-tryptophan biosynthesis; L-tryptophan from chorismate: step 4/5. In Pyrobaculum arsenaticum (strain DSM 13514 / JCM 11321 / PZ6), this protein is Indole-3-glycerol phosphate synthase.